The primary structure comprises 424 residues: Kynureninase (424 aa).

Residues Leu106, Thr107, 134–137 (FPSD), Asp219, His222, and Tyr244 each bind pyridoxal 5'-phosphate. Lys245 is subject to N6-(pyridoxal phosphate)lysine. Residues Trp274 and Asn302 each coordinate pyridoxal 5'-phosphate.

Belongs to the kynureninase family. In terms of assembly, homodimer. The cofactor is pyridoxal 5'-phosphate.

The catalysed reaction is L-kynurenine + H2O = anthranilate + L-alanine + H(+). It catalyses the reaction 3-hydroxy-L-kynurenine + H2O = 3-hydroxyanthranilate + L-alanine + H(+). It functions in the pathway amino-acid degradation; L-kynurenine degradation; L-alanine and anthranilate from L-kynurenine: step 1/1. Its pathway is cofactor biosynthesis; NAD(+) biosynthesis; quinolinate from L-kynurenine: step 2/3. In terms of biological role, catalyzes the cleavage of L-kynurenine (L-Kyn) and L-3-hydroxykynurenine (L-3OHKyn) into anthranilic acid (AA) and 3-hydroxyanthranilic acid (3-OHAA), respectively. This is Kynureninase from Xanthomonas campestris pv. campestris (strain B100).